The chain runs to 419 residues: Glutamyl-tRNA reductase (419 aa).

Substrate-binding positions include 49-52 (TCNR), Ser107, 112-114 (EPQ), and Gln118. Cys50 acts as the Nucleophile in catalysis. 187–192 (GAGETI) is an NADP(+) binding site.

The protein belongs to the glutamyl-tRNA reductase family. As to quaternary structure, homodimer.

The catalysed reaction is (S)-4-amino-5-oxopentanoate + tRNA(Glu) + NADP(+) = L-glutamyl-tRNA(Glu) + NADPH + H(+). It participates in porphyrin-containing compound metabolism; protoporphyrin-IX biosynthesis; 5-aminolevulinate from L-glutamyl-tRNA(Glu): step 1/2. Functionally, catalyzes the NADPH-dependent reduction of glutamyl-tRNA(Glu) to glutamate 1-semialdehyde (GSA). The sequence is that of Glutamyl-tRNA reductase from Vibrio atlanticus (strain LGP32) (Vibrio splendidus (strain Mel32)).